A 1671-amino-acid chain; its full sequence is MILDTDYITEDGKPVIRIFKKENGEFKIEYDRTFEPYFYALLKDDSAIEEVKKITAERHGTVVTVKRVEKVQKKFLGRPVEVWKLYFTHPQDVPAIRDKIREHPAVIDIYEYDIPFAKRYLIDKGLVPMEGDEELKMLAFDIETLYHEGEEFAEGPILMISYADEEGARVITWKNVDLPYVDVVSTEREMIKRFLRVVKEKDPDVLITYNGDNFDFAYLKKRCEKLGINFALGRDGSEPKIQRMGDRFAVEVKGRIHFDLYPVIRRTINLPTYTLEAVYEAVFGQPKEKVYAEEITTAWETGENLERVARYSMEDAKVTYELGKEFLPMEAQLSRLIGQSLWDVSRSSTGNLVEWFLLRKAYERNELAPNKPDEKELARRRQSYEGGYVKEPERGLWENIVYLDFRCHPADTKVVVKGKGIINISEVQEGDYVLGIDGWQRVRKVWEYDYKGELVNINGLKCTPNHKLPVVTKNERQTRIRDSLAKSFLTKKVKGKIITTPLFYEIGRATSENIPEEEVLKGELAGILLAEGTLLRKDVEYFDSSRKKRRISHQYRVEITIGKDEEEFRDRITYIFERLFGITPSISEKKGTNAVTLKVAKKNVYLKVKEIMDNIESLHAPSVLRGFFEGDGSVNRVRRSIVATQGTKNEWKIKLVSKLLSQLGIPHQTYTYQYQENGKDRSRYILEITGKDGLILFQTLIGFISERKNALLNKAISQREMNNLENNGFYRLSEFNVSTEYYEGKVYDLTLEGTPYYFANGILTHNSLYPSIIITHNVSPDTLNREGCKEYDVAPQVGHRFCKDFPGFIPSLLGDLLEERQKIKKKMKATIDPIERKLLDYRQRAIKILANSILPEEWLPVLEEGEVHFVRIGELIDRMMEENAGKVKREGETEVLEVSGLEVPSFNRRTKKAELKRVKALIRHDYSGKVYTIRLKSGRRIKITSGHSLFSVRNGELVEVTGDELKPGDLVAVPRRLELPERNHVLNLVELLLGTPEEETLDIVMTIPVKGKKNFFKGMLRTLRWIFGEEKRPRTARRYLRHLEDLGYVRLKKIGYEVLDWDSLKNYRRLYEALVENVRYNGNKREYLVEFNSIRDAVGIMPLKELKEWKIGTLNGFRMSPLIEVDESLAKLLGYYVSEGYARKQRNPKNGWSYSVKLYNEDPEVLDDMERLASRFFGKVRRGRNYVEIPKKIGYLLFENMCGVLAENKRIPEFVFTSPKGVRLAFLEGYFIGDGDVHPNKRLRLSTKSELLANQLVLLLNSVGVSAVKLGHDSGVYRVYINEELPFVKLDKKKNAYYSHVIPKEVLSEVFGKVFQKNVSPQTFRKMVEDGRLDPEKAQRLSWLIEGDVVLDRVESVDVEDYDGYVYDLSVEDNENFLVGFGLVYAHNSYYGYYGYARARWYCKECAESVTAWGREYITMTIKEIEEKYGFKVIYSDTDGFFATIPGADAETVKKKAMEFLKYINAKLPGALELEYEGFYKRGFFVTKKKYAVIDEEGKITTRGLEIVRRDWSEIAKETQARVLEALLKDGDVEKAVRIVKEVTEKLSKYEVPPEKLVIHEQITRDLKDYKATGPHVAVAKRLAARGVKIRPGTVISYIVLKGSGRIGDRAIPFDEFDPTKHKYDAEYYIENQVLPAVERILRAFGYRKEDLRYQKTRQVGLSAWLKPKGT.

The 3'-5' exonuclease stretch occupies residues 135–326 (LKMLAFDIET…KVTYELGKEF (192 aa)). Residues 524-665 (LAGILLAEGT…VSKLLSQLGI (142 aa)) enclose the DOD-type homing endonuclease 1 domain. A disulfide bond links Cys788 and Cys802. A DOD-type homing endonuclease 2 domain is found at 1132–1265 (LLGYYVSEGY…LVLLLNSVGV (134 aa)). Cys1403 and Cys1406 form a disulfide bridge.

The protein belongs to the DNA polymerase type-B family. In terms of processing, undergoes a protein self splicing that involves a post-translational excision of the intervening region (intein) followed by peptide ligation.

The enzyme catalyses DNA(n) + a 2'-deoxyribonucleoside 5'-triphosphate = DNA(n+1) + diphosphate. Has high processivity, a high polymerization rate and high fidelity. In addition to polymerase activity, also exhibits 3' to 5' exonuclease activity. Functionally, intein encoded endonucleases are thought to mediate intein mobility by site-specific recombination initiated by endonuclease cleavage at the 'homing site' in genes that lack the intein. Upon expression in E.coli PI-PkoI recognizes the minimal sequence 5'-GATTTTAGATCCCTGTACC-3' and cuts after T-10. PI-PkoII recognizes the minimal sequence 5'-CAGCTACTACGGTTAC-3' and cuts after C-10. Given the high intracellular K(+) content (&gt;0.5 M), PI-PkoII is probably more active than PI-PkoI in vivo. This is DNA polymerase (pol) from Thermococcus kodakarensis (strain ATCC BAA-918 / JCM 12380 / KOD1) (Pyrococcus kodakaraensis (strain KOD1)).